A 305-amino-acid chain; its full sequence is UDP-3-O-acyl-N-acetylglucosamine deacetylase (305 aa).

Residues histidine 79, histidine 238, and aspartate 242 each coordinate Zn(2+). The active-site Proton donor is histidine 265.

The protein belongs to the LpxC family. It depends on Zn(2+) as a cofactor.

It carries out the reaction a UDP-3-O-[(3R)-3-hydroxyacyl]-N-acetyl-alpha-D-glucosamine + H2O = a UDP-3-O-[(3R)-3-hydroxyacyl]-alpha-D-glucosamine + acetate. It functions in the pathway glycolipid biosynthesis; lipid IV(A) biosynthesis; lipid IV(A) from (3R)-3-hydroxytetradecanoyl-[acyl-carrier-protein] and UDP-N-acetyl-alpha-D-glucosamine: step 2/6. Its function is as follows. Catalyzes the hydrolysis of UDP-3-O-myristoyl-N-acetylglucosamine to form UDP-3-O-myristoylglucosamine and acetate, the committed step in lipid A biosynthesis. In Erwinia tasmaniensis (strain DSM 17950 / CFBP 7177 / CIP 109463 / NCPPB 4357 / Et1/99), this protein is UDP-3-O-acyl-N-acetylglucosamine deacetylase.